The chain runs to 108 residues: Circadian clock oscillator protein KaiB (108 aa).

Belongs to the KaiB family. In terms of assembly, undergoes a major conformational rearrangment; in the free state forms homotetramers with 2 dimers. When bound to the CI domain of KaiC, KaiA or CikA switches to a monomeric thioredoxin-fold (KaiB(fs)). The KaiABC complex composition changes during the circadian cycle to control KaiC phosphorylation. Complexes KaiC(6), KaiA(2-4):KaiC(6), KaiB(6):KaiC(6) and KaiC(6):KaiB(6):KaiA(12) are among the most important forms, many form cooperatively. Binds to KaiA; 1 KaiB(fs) binds to the KaiA homodimer. Binds to the B-loop in the CI domain of KaiC; SasA and KaiB compete to bind to the CI domain. Binding to KaiC CI domain occurs 1:1. KaiA and CikA bind to the same region of KaiB(fs) and therefore compete.

Its function is as follows. Key component of the KaiABC oscillator complex, which constitutes the main circadian regulator in cyanobacteria. Its composition changes during the circadian cycle to control KaiC phosphorylation. KaiA stimulates KaiC autophosphorylation, while KaiB sequesters KaiA, leading to KaiC autodephosphorylation. KaiA binding to KaiC yields KaiA(2-4):KaiC(6) complexes which stimulate KaiC autophosphorylation. Phospho-Ser-431 KaiC accumulation triggers binding of KaiB to form the KaiB(6):KaiC(6) complex, leading to changes in the output regulators CikA and SasA. KaiB switches to a thioredoxin-like fold (KaiB(fs)) in complex with KaiC. KaiB(6):KaiC(6) formation exposes a site for KaiA binding that sequesters KaiA from the CII domain, making the KaiC(6):KaiB(6):KaiA(12) complex that results in KaiC autodephosphorylation. Complete dephosphorylation of KaiC leads to dissociation of KaiA(2):KaiB(1), completing 1 cycle of the Kai oscillator. A metamorphic protein which reversibly switches between an inactive tetrameric fold and a rare, thioredoxin-like monomeric fold (KaiB(fs)). KaiB(fs) binds phospho-KaiC, KaiA and CikA. KaiA and CikA compete for binding to KaiB(fs), and KaiB(fs) and SasA compete for binding to KaiC, thus the clock oscillator and output signal pathway are tightly coupled. The sequence is that of Circadian clock oscillator protein KaiB from Thermosynechococcus vestitus (strain NIES-2133 / IAM M-273 / BP-1).